The chain runs to 134 residues: Small ribosomal subunit protein uS11 (134 aa).

A disordered region spans residues 114 to 134 (TPVPHNGTRPPRKWFKRQEKR). Residues 123-134 (PPRKWFKRQEKR) are compositionally biased toward basic residues.

This sequence belongs to the universal ribosomal protein uS11 family. In terms of assembly, part of the 30S ribosomal subunit. Interacts with proteins S7 and S18. Binds to IF-3.

In terms of biological role, located on the platform of the 30S subunit, it bridges several disparate RNA helices of the 16S rRNA. Forms part of the Shine-Dalgarno cleft in the 70S ribosome. The polypeptide is Small ribosomal subunit protein uS11 (Mesomycoplasma hyopneumoniae (strain 232) (Mycoplasma hyopneumoniae)).